We begin with the raw amino-acid sequence, 89 residues long: Translation initiation factor IF-1, chloroplastic (89 aa).

The S1-like domain maps to 1-73 (MKEKEAKWVV…TKGRIIYRLP (73 aa)).

It belongs to the IF-1 family. Component of the 30S ribosomal translation pre-initiation complex which assembles on the 30S ribosome in the order IF-2 and IF-3, IF-1 and N-formylmethionyl-tRNA(fMet); mRNA recruitment can occur at any time during PIC assembly.

It localises to the plastid. It is found in the chloroplast. Its function is as follows. One of the essential components for the initiation of protein synthesis. Stabilizes the binding of IF-2 and IF-3 on the 30S subunit to which N-formylmethionyl-tRNA(fMet) subsequently binds. Helps modulate mRNA selection, yielding the 30S pre-initiation complex (PIC). Upon addition of the 50S ribosomal subunit IF-1, IF-2 and IF-3 are released leaving the mature 70S translation initiation complex. The sequence is that of Translation initiation factor IF-1, chloroplastic from Jasminum nudiflorum (Winter jasmine).